A 265-amino-acid polypeptide reads, in one-letter code: MPPELLRDVLMRIERSEDTWPSRKNVVSCVGVCKNWRQIFKEIVNVPEVSSKFTFPISLKQPGPGGSLVQCYVKRNRSNQTFYLYLGGEAKIFCQSEPSEPNKSIWKLSLKPGGTATTQTELDNFVSFRSPSGQKEGVLVLKSKVPRLEEQSWCLDFNGWRDIVSSGKKFQLVALLRTNLRMKTTFSSLRKSETCTNSSYEAEWIPLVRTSVFAVIARVCRDKKHTPSYELKLALYFAKNSAILKKFVLRGYTREEDLLALPVAN.

The region spanning methionine 1 to valine 44 is the F-box domain. The region spanning serine 228–arginine 250 is the FBD domain.

Belongs to the TUB family.

This chain is Putative Tubby-like protein 4, found in Arabidopsis thaliana (Mouse-ear cress).